A 460-amino-acid chain; its full sequence is Phosphoglucomutase (460 aa).

Catalysis depends on Ser-103, which acts as the Phosphoserine intermediate. Ser-103 is a binding site for Mg(2+). Substrate contacts are provided by residues 103–104 (SH) and Lys-113. Residues Asp-239, Asp-241, and Asp-243 each coordinate Mg(2+). Substrate is bound by residues 243–244 (DR), Thr-303, and 322–324 (EMS).

It belongs to the phosphohexose mutase family. Requires Mg(2+) as cofactor.

Its subcellular location is the cytoplasm. The enzyme catalyses alpha-D-glucose 1-phosphate = alpha-D-glucose 6-phosphate. This enzyme participates in both the breakdown and synthesis of glucose. The protein is Phosphoglucomutase (pgm) of Neisseria meningitidis serogroup A / serotype 4A (strain DSM 15465 / Z2491).